The following is a 366-amino-acid chain: NADP-dependent oxidoreductase domain-containing protein 1 (366 aa).

It belongs to the pyrroline-5-carboxylate reductase family.

Its function is as follows. Probable oxidoreductase. In Mus musculus (Mouse), this protein is NADP-dependent oxidoreductase domain-containing protein 1 (Noxred1).